The chain runs to 272 residues: MPSFVVIGNPIGHSKSPRIHQLFAEQTGIAHPYESLCAPLAGFEQTARSFFAKDGGGANVTLPFKQQACKLADELTERAALSGAVNTLKKLDDGRLVGDNTDGIGLLSDLERLDLIKPDDRILLIGAGGAARGVILPLLSFGCRLTVTNRTQEKAEDLAQLFKHSGHIDSMVKEQLAAGRFDLVINATSSGVGGGIPDIPEGLIGDHTRCYDMFYQAGDTPFLHWCRQQGAFQMADGLGMLVGQAAHSFMLWHGIMPQITPAIAVLKAEMGA.

Shikimate contacts are provided by residues 14–16 (SKS) and T61. K65 acts as the Proton acceptor in catalysis. E77 serves as a coordination point for NADP(+). Shikimate-binding residues include N86 and D102. NADP(+)-binding positions include 126–130 (GAGGA), 149–154 (NRTQEK), and M213. A shikimate-binding site is contributed by Y215. G237 provides a ligand contact to NADP(+).

This sequence belongs to the shikimate dehydrogenase family. In terms of assembly, homodimer.

It carries out the reaction shikimate + NADP(+) = 3-dehydroshikimate + NADPH + H(+). It participates in metabolic intermediate biosynthesis; chorismate biosynthesis; chorismate from D-erythrose 4-phosphate and phosphoenolpyruvate: step 4/7. Functionally, involved in the biosynthesis of the chorismate, which leads to the biosynthesis of aromatic amino acids. Catalyzes the reversible NADPH linked reduction of 3-dehydroshikimate (DHSA) to yield shikimate (SA). The sequence is that of Shikimate dehydrogenase (NADP(+)) from Erwinia tasmaniensis (strain DSM 17950 / CFBP 7177 / CIP 109463 / NCPPB 4357 / Et1/99).